We begin with the raw amino-acid sequence, 460 residues long: Proline--tRNA ligase (460 aa).

Belongs to the class-II aminoacyl-tRNA synthetase family. ProS type 3 subfamily. Homodimer.

It is found in the cytoplasm. It carries out the reaction tRNA(Pro) + L-proline + ATP = L-prolyl-tRNA(Pro) + AMP + diphosphate. Functionally, catalyzes the attachment of proline to tRNA(Pro) in a two-step reaction: proline is first activated by ATP to form Pro-AMP and then transferred to the acceptor end of tRNA(Pro). This chain is Proline--tRNA ligase, found in Methanococcus maripaludis (strain C6 / ATCC BAA-1332).